The primary structure comprises 3301 residues: Cadherin EGF LAG seven-pass G-type receptor 3 (3301 aa).

A signal peptide spans 1–31 (MARRPLWWGLPGPSTPVLLLLLLSLFPFSRE). Residues 32–2531 (ELGGGGDQDW…RLEGDLELLA (2500 aa)) are Extracellular-facing. Disordered regions lie at residues 148–189 (LPLD…ARRS) and 202–314 (KLWE…NRHP). Positions 267–276 (MRSRGLFRRR) are enriched in basic residues. Cadherin domains follow at residues 317 to 424 (PQYN…APVF), 425 to 536 (EQAQ…APQF), 537 to 642 (SEKR…APIF), 643 to 747 (VSTP…RPEF), 748 to 849 (TMKE…RPVF), 850 to 952 (QSAH…APQF), 953 to 1058 (VASH…APVF), 1059 to 1160 (PAEE…SPVL), and 1161 to 1257 (NNFQ…VVII). A glycan (N-linked (GlcNAc...) asparagine) is linked at asparagine 623. N-linked (GlcNAc...) asparagine glycosylation occurs at asparagine 838. Asparagine 1173, asparagine 1213, asparagine 1308, and asparagine 1318 each carry an N-linked (GlcNAc...) asparagine glycan. The region spanning 1366–1424 (DDNVCLREPCENYMKCVSVLRFDSSAPFLASTSTLFRPIQPIAGLRCRCPPGFTGDFCE) is the EGF-like 1; calcium-binding domain. Disulfide bonds link cysteine 1370–cysteine 1381, cysteine 1375–cysteine 1412, cysteine 1414–cysteine 1423, cysteine 1430–cysteine 1441, cysteine 1435–cysteine 1450, cysteine 1452–cysteine 1459, cysteine 1468–cysteine 1479, cysteine 1473–cysteine 1489, and cysteine 1491–cysteine 1502. In terms of domain architecture, EGF-like 2; calcium-binding spans 1426–1460 (ELDLCYSNPCRNGGACARREGGYTCVCRPRFTDCE). In terms of domain architecture, EGF-like 3; calcium-binding spans 1464-1503 (EAGRCVPGVCRNGGTCTNAPNGGFRCQCPAGGAFEGPRCE). The region spanning 1504–1708 (VAARSFPPSS…VANNGTMAGC (205 aa)) is the Laminin G-like 1 domain. 2 N-linked (GlcNAc...) asparagine glycosylation sites follow: asparagine 1638 and asparagine 1702. 4 cysteine pairs are disulfide-bonded: cysteine 1682–cysteine 1708, cysteine 1715–cysteine 1726, cysteine 1720–cysteine 1735, and cysteine 1737–cysteine 1746. Residues 1711–1747 (KSHFCASGPCKNNGFCSERWGGFSCDCPVGFGGKDCR) enclose the EGF-like 4; calcium-binding domain. One can recognise a Laminin G-like 2 domain in the interval 1751–1933 (AHPYHFQGNG…SHRVNVEPGC (183 aa)). Asparagine 1759 carries N-linked (GlcNAc...) asparagine glycosylation. Intrachain disulfides connect cysteine 1904/cysteine 1933, cysteine 1939/cysteine 1950, cysteine 1944/cysteine 1959, cysteine 1961/cysteine 1970, cysteine 1974/cysteine 1985, cysteine 1979/cysteine 1997, cysteine 1999/cysteine 2008, cysteine 2016/cysteine 2029, and cysteine 2031/cysteine 2041. Positions 1935 to 1971 (VTNPCASGPCPPHADCKDLWQTFSCTCRPGYYGPGCV) constitute an EGF-like 5; calcium-binding domain. Aspartate 1952 is modified ((3R)-3-hydroxyaspartate). Positions 1972-2002 (DACLLNPCQNQGSCRHLQGAPHGYTCDCVSG) constitute an EGF-like 6; calcium-binding domain. An EGF-like 7; calcium-binding domain is found at 2003 to 2042 (YFGQHCEHRVDQQCPRGWWGSPTCGPCNCDVHKGFDPNCN). Asparagine 2042 carries N-linked (GlcNAc...) asparagine glycosylation. The region spanning 2044-2079 (TNGQCHCKEFHYRPRGSDSCLPCDCYPVGSTSRSCA) is the EGF-like 8; calcium-binding domain. 5 disulfides stabilise this stretch: cysteine 2048-cysteine 2063, cysteine 2050-cysteine 2066, cysteine 2068-cysteine 2078, cysteine 2087-cysteine 2096, and cysteine 2099-cysteine 2111. Positions 2066-2113 (CDCYPVGSTSRSCAPHSGQCPCRPGALGRQCNSCDSPFAEVTASGCRV) constitute a Laminin EGF-like domain. Residue tyrosine 2115 is modified to Phosphotyrosine. N-linked (GlcNAc...) asparagine glycosylation is found at asparagine 2166, asparagine 2185, asparagine 2375, asparagine 2465, and asparagine 2497. Residues 2353 to 2388 (LLPSQASQPSPSEVLPTSSNAENATASSVVSPPAPL) form a disordered region. The segment covering 2355 to 2383 (PSQASQPSPSEVLPTSSNAENATASSVVS) has biased composition (low complexity). The GAIN-B domain occupies 2357–2521 (QASQPSPSEV…GVLMDASPRE (165 aa)). Cystine bridges form between cysteine 2471–cysteine 2503 and cysteine 2491–cysteine 2505. The GPS stretch occupies residues 2471–2521 (CVQWDPPGPTDQHGMWTARDCELVHRNGSHARCRCSRTGTFGVLMDASPRE). The helical transmembrane segment at 2532–2552 (VFTHVVVAVSVTALVLTAAVL) threads the bilayer. Residues 2553–2563 (LSLRSLKSNVR) are Cytoplasmic-facing. A helical membrane pass occupies residues 2564 to 2584 (GIHANVAAALGVAELLFLLGI). Topologically, residues 2585 to 2592 (HRTHNQLL) are extracellular. The chain crosses the membrane as a helical span at residues 2593–2613 (CTAVAILLHYFFLSTFAWLLV). At 2614–2634 (QGLHLYRMQVEPRNVDRGAMR) the chain is on the cytoplasmic side. A helical membrane pass occupies residues 2635 to 2655 (FYHALGWGVPAVLLGLAVGLD). The Extracellular segment spans residues 2656-2673 (PEGYGNPDFCWISIHEPL). The chain crosses the membrane as a helical span at residues 2674–2694 (IWSFAGPIVLVIVMNGTMFLL). Residues 2695-2716 (AARTSCSTGQREAKKTSVLTLR) are Cytoplasmic-facing. A helical transmembrane segment spans residues 2717–2737 (SSFLLLLLVSASWLFGLLAVN). At 2738 to 2744 (HSILAFH) the chain is on the extracellular side. A helical transmembrane segment spans residues 2745–2765 (YLHAGLCGLQGLAVLLLFCVL). Residues 2766–3301 (NADARAAWTP…SEVPRSEGHS (536 aa)) are Cytoplasmic-facing. Disordered stretches follow at residues 2823–2844 (SSAR…YLRD), 2879–2919 (AGAD…RPLR), and 2969–2992 (SNKD…TSLG). Acidic residues predominate over residues 2881 to 2891 (ADSDSDSDLSL). The span at 2910 to 2919 (TRGRFQRPLR) shows a compositional bias: basic residues. At tyrosine 3042 the chain carries Phosphotyrosine. The segment at 3083-3301 (APVLHPLSRP…SEVPRSEGHS (219 aa)) is disordered. Serine 3090 bears the Phosphoserine mark. Over residues 3094 to 3111 (SQERLDTAPARLEARDRG) the composition is skewed to basic and acidic residues. Low complexity-rich tracts occupy residues 3168 to 3189 (SPQR…SLSR) and 3239 to 3261 (LSSI…STPS). Polar residues predominate over residues 3276–3289 (TPRSATSHSISELS).

The protein belongs to the G-protein coupled receptor 2 family. LN-TM7 subfamily. In terms of tissue distribution, expressed in the CNS and in the eye.

It is found in the cell membrane. Functionally, receptor that may have an important role in cell/cell signaling during nervous system formation. In Mus musculus (Mouse), this protein is Cadherin EGF LAG seven-pass G-type receptor 3 (Celsr3).